Reading from the N-terminus, the 510-residue chain is NAD(P)H-quinone oxidoreductase subunit 2, chloroplastic (510 aa).

13 helical membrane-spanning segments follow: residues 24–44 (LLLF…GLIL), 59–79 (WFYF…LFRW), 99–119 (IFQF…VEYI), 124–144 (MAIT…MFLC), 149–169 (LITI…LSGY), 183–203 (YLLM…WLYG), 229–249 (ISIA…PAPF), 295–315 (WHLL…LIAI), 323–343 (MLAY…IVGD), 354–374 (YMLF…SFGL), 395–415 (ALSL…AGFF), 418–438 (LYLF…MGLL), and 484–504 (MTVC…ILAI).

The protein belongs to the complex I subunit 2 family. As to quaternary structure, NDH is composed of at least 16 different subunits, 5 of which are encoded in the nucleus.

It localises to the plastid. Its subcellular location is the chloroplast thylakoid membrane. The enzyme catalyses a plastoquinone + NADH + (n+1) H(+)(in) = a plastoquinol + NAD(+) + n H(+)(out). It catalyses the reaction a plastoquinone + NADPH + (n+1) H(+)(in) = a plastoquinol + NADP(+) + n H(+)(out). Functionally, NDH shuttles electrons from NAD(P)H:plastoquinone, via FMN and iron-sulfur (Fe-S) centers, to quinones in the photosynthetic chain and possibly in a chloroplast respiratory chain. The immediate electron acceptor for the enzyme in this species is believed to be plastoquinone. Couples the redox reaction to proton translocation, and thus conserves the redox energy in a proton gradient. In Sisyrinchium montanum (Strict blue-eyed grass), this protein is NAD(P)H-quinone oxidoreductase subunit 2, chloroplastic.